The sequence spans 59 residues: Small ribosomal subunit protein bS21 (59 aa).

The segment covering 32-42 has biased composition (basic and acidic residues); sequence VRKREHYDKPS. The segment at 32-59 is disordered; that stretch reads VRKREHYDKPSVKRKKKAEAARRKNAKK. A compositionally biased stretch (basic residues) spans 43–59; sequence VKRKKKAEAARRKNAKK.

The protein belongs to the bacterial ribosomal protein bS21 family.

This chain is Small ribosomal subunit protein bS21, found in Clostridioides difficile (strain 630) (Peptoclostridium difficile).